Reading from the N-terminus, the 296-residue chain is Protoheme IX farnesyltransferase (296 aa).

9 consecutive transmembrane segments (helical) span residues 27–47, 48–68, 98–118, 120–140, 148–168, 175–195, 219–239, 242–262, and 274–294; these read IMYL…GTIH, PLIG…AGAL, ALEC…LTVN, VSAI…TMVL, IVIG…SVTG, LLLF…LSLL, HIMG…LYVA, VLYE…AYCL, and CMGL…AIAL.

The protein belongs to the UbiA prenyltransferase family. Protoheme IX farnesyltransferase subfamily.

It localises to the cell inner membrane. The catalysed reaction is heme b + (2E,6E)-farnesyl diphosphate + H2O = Fe(II)-heme o + diphosphate. It participates in porphyrin-containing compound metabolism; heme O biosynthesis; heme O from protoheme: step 1/1. Functionally, converts heme B (protoheme IX) to heme O by substitution of the vinyl group on carbon 2 of heme B porphyrin ring with a hydroxyethyl farnesyl side group. The sequence is that of Protoheme IX farnesyltransferase from Anaplasma phagocytophilum (strain HZ).